The sequence spans 528 residues: Berberine bridge enzyme-like 17 (528 aa).

The first 19 residues, 1-19, serve as a signal peptide directing secretion; that stretch reads MKEVVYVLLLVLLVSVSDA. N-linked (GlcNAc...) asparagine glycans are attached at residues Asn20, Asn35, Asn52, and Asn72. Cys32 and Cys94 are oxidised to a cystine. An FAD-binding PCMH-type domain is found at 69 to 246; sequence LNPNDTKLIA…LSWKINLVDV (178 aa). The 6-(S-cysteinyl)-8alpha-(pros-histidyl)-FAD (His-Cys) cross-link spans 109-171; it reads HDYEGLSFTS…KTLAFAGGVC (63 aa). Asn256, Asn340, and Asn439 each carry an N-linked (GlcNAc...) asparagine glycan.

This sequence belongs to the oxygen-dependent FAD-linked oxidoreductase family. FAD is required as a cofactor. The FAD cofactor is bound via a bicovalent 6-S-cysteinyl, 8alpha-N1-histidyl FAD linkage.

It localises to the secreted. The protein localises to the cell wall. The protein is Berberine bridge enzyme-like 17 of Arabidopsis thaliana (Mouse-ear cress).